The chain runs to 385 residues: MTTSARDTGLDSHELARLHELARHSHAVITRHQDAGGAYPAAPTFSAYRGYAWLRDGSFTAEGISRYGDVASAGRFHDWVDGVLRRRRGQVDDLLAAVDRGEVPSNEGMLPTRFTFDGNDGSDPWWDFQTDGYGMWLWSVVTHAARHGLDLERWRAGIDVAVDYLLAFWDRPCYDWWEEHVEHRHVSTLGAIHGGLVAVGTCAALRSAPWSAATLQVAARIRSLVSAEGVVDGHLVKWLGSSAVDGSLPACVVPFGLVPPDDDVAAMTRAAVAKDLDVDGGVHRFAADVFYGGGQWILLSALLGWNLAAAGDTAGALRHLRWIADQADADGDLPEQVPHHLLHPGSRAEWVARWGTVATPLLWSHGMYLILADELGLLPPAAKDA.

Tryptophan 125 provides a ligand contact to substrate. Aspartate 175 acts as the Proton acceptor in catalysis. Glutamate 178 (proton donor) is an active-site residue. Glutamate 335 functions as the Proton acceptor in the catalytic mechanism.

This sequence belongs to the glycosyl hydrolase 15 family.

It is found in the cytoplasm. It catalyses the reaction isomaltose + H2O = beta-D-glucose + D-glucose. Its function is as follows. Involved in the intracellular degradation of the cyclic tetrasaccharide cyclobis-(1-6)-alpha-nigerosyl (CNN) formed extracellularly from starch. Catalyzes the hydrolysis of alpha-1,6-glucosidic linkage from the non-reducing end of isomaltose to yield beta-D-glucose and D-glucose. Can also act on panose and isomaltotriose at a lower rate. It displays low or no activity toward CNN and the general GH15 enzyme substrates such as maltose, soluble starch or dextran. The sequence is that of Isomaltose glucohydrolase from Kribbella flavida (strain DSM 17836 / JCM 10339 / NBRC 14399).